Consider the following 420-residue polypeptide: Glutamyl-tRNA reductase (420 aa).

Substrate-binding positions include 49-52 (TCNR), serine 109, 114-116 (EPQ), and glutamine 120. Residue cysteine 50 is the Nucleophile of the active site. 189–194 (GAGETI) is an NADP(+) binding site.

This sequence belongs to the glutamyl-tRNA reductase family. As to quaternary structure, homodimer.

It catalyses the reaction (S)-4-amino-5-oxopentanoate + tRNA(Glu) + NADP(+) = L-glutamyl-tRNA(Glu) + NADPH + H(+). It participates in porphyrin-containing compound metabolism; protoporphyrin-IX biosynthesis; 5-aminolevulinate from L-glutamyl-tRNA(Glu): step 1/2. Functionally, catalyzes the NADPH-dependent reduction of glutamyl-tRNA(Glu) to glutamate 1-semialdehyde (GSA). This Photorhabdus laumondii subsp. laumondii (strain DSM 15139 / CIP 105565 / TT01) (Photorhabdus luminescens subsp. laumondii) protein is Glutamyl-tRNA reductase.